The sequence spans 281 residues: NADPH-dependent 7-cyano-7-deazaguanine reductase (281 aa).

Position 81-83 (81-83) interacts with substrate; sequence IES. 83-84 is an NADPH binding site; it reads SK. C188 serves as the catalytic Thioimide intermediate. D195 functions as the Proton donor in the catalytic mechanism. Residue 227-228 participates in substrate binding; it reads HE. 256–257 provides a ligand contact to NADPH; it reads RG.

It belongs to the GTP cyclohydrolase I family. QueF type 2 subfamily. In terms of assembly, homodimer.

It is found in the cytoplasm. The enzyme catalyses 7-aminomethyl-7-carbaguanine + 2 NADP(+) = 7-cyano-7-deazaguanine + 2 NADPH + 3 H(+). It functions in the pathway tRNA modification; tRNA-queuosine biosynthesis. Functionally, catalyzes the NADPH-dependent reduction of 7-cyano-7-deazaguanine (preQ0) to 7-aminomethyl-7-deazaguanine (preQ1). The protein is NADPH-dependent 7-cyano-7-deazaguanine reductase of Polaromonas naphthalenivorans (strain CJ2).